We begin with the raw amino-acid sequence, 74 residues long: Fulgimotoxin (74 aa).

Gln-1 carries the pyrrolidone carboxylic acid modification. Disulfide bonds link Cys-10–Cys-34, Cys-13–Cys-21, Cys-27–Cys-51, Cys-55–Cys-66, and Cys-67–Cys-72.

Belongs to the three-finger toxin family. Ancestral subfamily. Boigatoxin sub-subfamily. Monomer. The N-terminus is blocked. Post-translationally, contains 5 disulfide bonds. In terms of tissue distribution, expressed by the venom gland.

Its subcellular location is the secreted. Its function is as follows. Reptile-specific three-finger toxin that is lethal at low doses for lizards, but not for mice. Probably acts as a neurotoxin. In Oxybelis fulgidus (Green vine snake), this protein is Fulgimotoxin.